A 364-amino-acid polypeptide reads, in one-letter code: Tyrosine--tRNA ligase (364 aa).

Residue Y39 coordinates L-tyrosine. ATP is bound by residues H49 and W52. Residues Y165, Q169, D172, and Q187 each coordinate L-tyrosine. A 'KMSKS' region motif is present at residues 238–242 (KMSKS). K241 is a binding site for ATP.

This sequence belongs to the class-I aminoacyl-tRNA synthetase family. TyrS type 4 subfamily. Homodimer.

Its subcellular location is the cytoplasm. It catalyses the reaction tRNA(Tyr) + L-tyrosine + ATP = L-tyrosyl-tRNA(Tyr) + AMP + diphosphate + H(+). Functionally, catalyzes the attachment of tyrosine to tRNA(Tyr) in a two-step reaction: tyrosine is first activated by ATP to form Tyr-AMP and then transferred to the acceptor end of tRNA(Tyr). This Aeropyrum pernix (strain ATCC 700893 / DSM 11879 / JCM 9820 / NBRC 100138 / K1) protein is Tyrosine--tRNA ligase.